The following is a 1281-amino-acid chain: Protein ETHYLENE-INSENSITIVE 2 (1281 aa).

Residues 1 to 21 (MDGQQLRSSESPASGGGGVTG) lie on the Cytoplasmic side of the membrane. Residues 22-42 (GGAPHLFHALGPALLISIGYI) form a helical membrane-spanning segment. At 43–61 (DLGKWVAAVEAGSRFGLDL) the chain is on the extracellular side. The chain crosses the membrane as a helical span at residues 62-82 (VLLALLFNFMAILCQYLAACI). Residues 83-112 (GTVTGRSLAEICHQEYSRPTCIFLGVQAGL) are Cytoplasmic-facing. A helical transmembrane segment spans residues 113-133 (SLLTSELTMIFGIALGFNLLF). Topologically, residues 134 to 137 (EYDD) are extracellular. Residues 138–158 (LITGICFATVVPNLLPYAISH) traverse the membrane as a helical segment. The Cytoplasmic segment spans residues 159–163 (LGKKM). The chain crosses the membrane as a helical span at residues 164-184 (VGTLNACIAGFALLCYVLGLL). Over 185-208 (VSQPQIPLTTNVIFPKLSGESAYS) the chain is Extracellular. Residues 209-229 (LMALLGANVMAHNFYIHSSVV) traverse the membrane as a helical segment. The Cytoplasmic segment spans residues 230–238 (QGQKRSAFA). A helical membrane pass occupies residues 239–259 (VGALFHDHLFSVLFIFTGIFL). The Extracellular segment spans residues 260–297 (VNHVLMNSAAADSTNTLLLTFQDVVELMNQIFVNPMAP). The chain crosses the membrane as a helical span at residues 298–318 (TIFLVVLLFSSHIISLTSAIG). At 319–325 (SQVISQH) the chain is on the cytoplasmic side. A helical membrane pass occupies residues 326–346 (LFGINLPLSGHHLILKAFAIV). The Extracellular portion of the chain corresponds to 347 to 362 (PALYCAKVAGAEGIYQ). The helical transmembrane segment at 363 to 383 (LLIICQIIQAMLLPSSVVPLF) threads the bilayer. Residues 384–400 (RVASSRLIMGAHRVSLH) lie on the Cytoplasmic side of the membrane. The helical transmembrane segment at 401–421 (LEILTFLAFLLMLFSNIIFMA) threads the bilayer. Residues 422-447 (EMLFGDSGWLNTLKGNTGSPVVFPST) lie on the Extracellular side of the membrane. A helical transmembrane segment spans residues 448 to 468 (VLITVACVSVAFSLYMAVTPL). Residues 469–1281 (KSGSHEAELQ…KRRLSSKGQQ (813 aa)) are Cytoplasmic-facing. Disordered stretches follow at residues 540–565 (IESD…SPSF) and 593–665 (ESTV…NGSG). Residues 548-557 (HSTAHTSTAP) are compositionally biased toward polar residues. Positions 599 to 610 (VDSKSTGERDIE) are enriched in basic and acidic residues.

This sequence belongs to the NRAMP (TC 2.A.55) family. In terms of tissue distribution, expressed in roots, leaf sheaths, leaf blades, flowers, developing seeds, germinating seeds and young seedlings. Expressed in adventitious roots, vascular tissues of the seminal roots, lateral roots, the connecting region between vascular tissues and lateral roots, mature leaf, mature stem, tips of adventitious roots derived from the node, shoot apex, young panicle, anthers, pistil, stigma, ovary, seed coat and fruit coat pericarp.

The protein resides in the membrane. Its function is as follows. Central factor in ethylene signaling pathways that control development, senescence and grain size. Acts as a positive component of the ethylene-signaling pathway. This Oryza sativa subsp. japonica (Rice) protein is Protein ETHYLENE-INSENSITIVE 2.